A 329-amino-acid polypeptide reads, in one-letter code: Catabolite control protein A (329 aa).

Residues 1–57 (MTVTIYDVAREARVSMATVSRVVNGNQNVKAETKNKVNEVIKRLNYRPNAVARGLAS) enclose the HTH lacI-type domain. The segment at residues 5-24 (IYDVAREARVSMATVSRVVN) is a DNA-binding region (H-T-H motif).

Its function is as follows. Global transcriptional regulator of carbon catabolite repression (CCR) and carbon catabolite activation (CCA), which ensures optimal energy usage under diverse conditions. The sequence is that of Catabolite control protein A (ccpA) from Staphylococcus aureus (strain MRSA252).